The primary structure comprises 133 residues: U6 snRNA-associated Sm-like protein LSm1 (133 aa).

The 76-residue stretch at 5 to 80 folds into the Sm domain; the sequence is PGTASLIEDI…VVLLGEIDLE (76 aa). Position 123 is a phosphoserine (serine 123). The residue at position 129 (threonine 129) is a Phosphothreonine.

This sequence belongs to the snRNP Sm proteins family. Interacts with SLBP; interaction with SLBP occurs when histone mRNA is being rapidly degraded during the S phase. LSm subunits form a heteromer with a donut shape.

It localises to the cytoplasm. The protein localises to the P-body. Plays a role in the degradation of histone mRNAs, the only eukaryotic mRNAs that are not polyadenylated. Probably also part of an LSm subunits-containing complex involved in the general process of mRNA degradation. In Homo sapiens (Human), this protein is U6 snRNA-associated Sm-like protein LSm1 (LSM1).